The following is a 44-amino-acid chain: Thaumatin-like protein 5 (44 aa).

Belongs to the thaumatin family.

In Glebionis coronaria (Crown daisy), this protein is Thaumatin-like protein 5.